The following is a 526-amino-acid chain: MTVSKLLKERVRYAPYLAKVKTPEELIPLFKNGQYLGWSGFTGVGTPKAVPDALIKHVEDNNLQGKLRFNLFVGASAGPEENKWAEHDMIIRRAPHQVGKPIAKAINNGKIQFFDKHLSMFPQDLTYGYYTRDRTDGKILDYMIIEATAIKEDGSIVPGPSVGGSPEFISVSDKVIIEVNTATPSFEGVHDIDMPVNPPHRVPYPYTKVDQKIGVDSIPVDPERVIAIVESKTRDQVGPNTPSDDMSKAIAGNLIEFFRNEVKHGRLPENLLPLQSGIGNIANAVIEGLTDANFKHLNVWTEVLQDSFLDLFENGSLDYATATSIRLTEPGFERVFKNWDFYKSRLCLRSQVVSNNPELIRRLGVIAMNTPVEADIYAHANSTNVNGSRMLNGLGGSADFLRNAKLSIMHCPAARPTKVDPTGISSIVPMVSHVDQTEHDLDVLVTDQGLADLRGLSPRERAREIINKCAHPDYKPLLQDYLDRAEHYATKHGCLHEPHMLKNAFKFHTNLAEKGTMKVESWDPVE.

Residue 277–281 coordinates CoA; sequence GIGNI. Glutamate 302 serves as the catalytic 5-glutamyl coenzyme A thioester intermediate. Positions 392 and 396 each coordinate CoA.

It belongs to the acetyl-CoA hydrolase/transferase family.

The protein resides in the cytoplasm. It carries out the reaction acetyl-CoA + H2O = acetate + CoA + H(+). Its function is as follows. Presumably involved in regulating the intracellular acetyl-CoA pool for fatty acid and cholesterol synthesis and fatty acid oxidation. The protein is Acetyl-CoA hydrolase (ACH1) of Candida glabrata (strain ATCC 2001 / BCRC 20586 / JCM 3761 / NBRC 0622 / NRRL Y-65 / CBS 138) (Yeast).